Here is a 449-residue protein sequence, read N- to C-terminus: 3-phosphoshikimate 1-carboxyvinyltransferase (449 aa).

3-phosphoshikimate-binding residues include K28, S29, and R33. Position 28 (K28) interacts with phosphoenolpyruvate. Residues G105 and R133 each contribute to the phosphoenolpyruvate site. 4 residues coordinate 3-phosphoshikimate: S179, Q181, D332, and K359. Residue Q181 participates in phosphoenolpyruvate binding. The Proton acceptor role is filled by D332. Positions 363 and 406 each coordinate phosphoenolpyruvate.

It belongs to the EPSP synthase family. In terms of assembly, monomer.

The protein localises to the cytoplasm. It carries out the reaction 3-phosphoshikimate + phosphoenolpyruvate = 5-O-(1-carboxyvinyl)-3-phosphoshikimate + phosphate. Its pathway is metabolic intermediate biosynthesis; chorismate biosynthesis; chorismate from D-erythrose 4-phosphate and phosphoenolpyruvate: step 6/7. In terms of biological role, catalyzes the transfer of the enolpyruvyl moiety of phosphoenolpyruvate (PEP) to the 5-hydroxyl of shikimate-3-phosphate (S3P) to produce enolpyruvyl shikimate-3-phosphate and inorganic phosphate. The sequence is that of 3-phosphoshikimate 1-carboxyvinyltransferase from Nitrobacter hamburgensis (strain DSM 10229 / NCIMB 13809 / X14).